A 987-amino-acid chain; its full sequence is Kinesin-like protein KIN-14G (987 aa).

The region spanning 44-163 (SLRRYEAAGW…CILALKSYSE (120 aa)) is the Calponin-homology (CH) domain. Residues 201–221 (ISRTQSTDMLSTDQPLSSDGD) form a disordered region. Residues 394–721 (NIRVYCRVRP…LKFAERVGSV (328 aa)) enclose the Kinesin motor domain. ATP is bound at residue 478–485 (GQTGSGKT). A coiled-coil region spans residues 725 to 754 (AARVNKDNSEVKELKEQIANLKMALVRKGN). Disordered stretches follow at residues 759-849 (QPTA…ESKS) and 927-987 (NIQN…SLGT). Residues 788–797 (MGNTSNNSRP) are compositionally biased toward polar residues. The segment covering 840–849 (GKDEDRESKS) has biased composition (basic and acidic residues). Positions 964-974 (PPNTVNSQPQR) are enriched in polar residues.

The protein belongs to the TRAFAC class myosin-kinesin ATPase superfamily. Kinesin family. KIN-14 subfamily. As to quaternary structure, monomer. Flower specific.

The protein localises to the cytoplasm. Its subcellular location is the cytoskeleton. In terms of biological role, microtubule-binding motor protein. The protein is Kinesin-like protein KIN-14G of Arabidopsis thaliana (Mouse-ear cress).